A 512-amino-acid polypeptide reads, in one-letter code: Cytochrome P450 72A11 (512 aa).

The helical transmembrane segment at 2–22 (EISVASVTVSVAVVVVSWWVW) threads the bilayer. Cys460 lines the heme pocket.

Belongs to the cytochrome P450 family. Heme is required as a cofactor.

The protein localises to the membrane. The polypeptide is Cytochrome P450 72A11 (CYP72A11) (Arabidopsis thaliana (Mouse-ear cress)).